A 350-amino-acid polypeptide reads, in one-letter code: Glycerol-1-phosphate dehydrogenase [NAD(P)+] (350 aa).

NAD(+) is bound by residues 96–100 (GNIID) and 118–121 (TAPS). A substrate-binding site is contributed by aspartate 123. Position 127 (serine 127) interacts with NAD(+). Aspartate 170 lines the substrate pocket. Positions 170 and 250 each coordinate Zn(2+). Residue histidine 254 coordinates substrate. Histidine 266 serves as a coordination point for Zn(2+).

The protein belongs to the glycerol-1-phosphate dehydrogenase family. As to quaternary structure, homodimer. Zn(2+) is required as a cofactor.

It is found in the cytoplasm. It carries out the reaction sn-glycerol 1-phosphate + NAD(+) = dihydroxyacetone phosphate + NADH + H(+). The catalysed reaction is sn-glycerol 1-phosphate + NADP(+) = dihydroxyacetone phosphate + NADPH + H(+). The protein operates within membrane lipid metabolism; glycerophospholipid metabolism. In terms of biological role, catalyzes the NAD(P)H-dependent reduction of dihydroxyacetonephosphate (DHAP or glycerone phosphate) to glycerol 1-phosphate (G1P). The G1P thus generated is used as the glycerophosphate backbone of phospholipids in the cellular membranes of Archaea. The sequence is that of Glycerol-1-phosphate dehydrogenase [NAD(P)+] from Sulfurisphaera tokodaii (strain DSM 16993 / JCM 10545 / NBRC 100140 / 7) (Sulfolobus tokodaii).